The primary structure comprises 667 residues: Small ribosomal subunit protein mS39 (667 aa).

The N-terminal 11 residues, 1 to 11, are a transit peptide targeting the mitochondrion; it reads MASSCSQALRH. Residues 199–226 are disordered; sequence EAEQRSEEMEDIQDETQTKKGRSPKASD. PPR repeat units lie at residues 249–283, 284–323, 324–360, 361–400, 482–516, and 565–599; these read NTRS…RLKA, DVHI…KVKP, NLLT…SIEP, SLAS…SFTP, SSNA…GHGN, and TASS…NRVP.

The protein belongs to the mitochondrion-specific ribosomal protein mS39 family.

The protein resides in the mitochondrion. Mitochondrial RNA-binding protein that may have a role in mitochondrial translation. The polypeptide is Small ribosomal subunit protein mS39 (ptcd3) (Danio rerio (Zebrafish)).